The following is a 164-amino-acid chain: uncharacterized protein (164 aa).

The signal sequence occupies residues 1-18 (MILILTIIVGFLIYFVTA). The N-linked (GlcNAc...) asparagine; by host glycan is linked to Asn-88.

The protein belongs to the IIV-6 357R family.

This is an uncharacterized protein from Acheta domesticus (House cricket).